A 773-amino-acid polypeptide reads, in one-letter code: Kelch domain-containing protein 7A (773 aa).

The chain crosses the membrane as a helical span at residues 23–40; it reads VVLSAAALLLVTAAYKLY. A glycan (N-linked (GlcNAc...) asparagine) is linked at N61. Disordered regions lie at residues 64–99 and 114–207; these read EALGQLAFQEAPPGTLPRGRRRRKASKGAGTSLDYS and SEEA…APNG. S89 is modified (phosphoserine). Residues 114–126 show a composition bias toward basic and acidic residues; sequence SEEATRKGSDESQ. Residue N256 is glycosylated (N-linked (GlcNAc...) asparagine). Residues 296–355 are disordered; the sequence is KADSRPVPCPAALADAPSPGPGPEPLVTGAASRDEAANTAGGGASEAASPQPVASPSAPG. Kelch repeat units lie at residues 323–370, 488–534, 537–585, 586–628, and 631–673; these read TGAA…ENPE, KRLV…LCTL, YLFV…ALEG, HLYA…ATVC, and EIFV…AVNG. Positions 340 to 354 are enriched in low complexity; that stretch reads SEAASPQPVASPSAP. Position 361 is a phosphoserine (S361).

The protein localises to the membrane. The sequence is that of Kelch domain-containing protein 7A (Klhdc7a) from Mus musculus (Mouse).